Reading from the N-terminus, the 513-residue chain is Zinc finger CCCH-type with G patch domain-containing protein (513 aa).

The C3H1-type zinc-finger motif lies at 155–178; it reads PCSYYLEGECRFDETKCRFSHGAL. Acidic residues-rich tracts occupy residues 252–261 and 271–283; these read DQDEDDELSS and DSSD…MDDL. The tract at residues 252-283 is disordered; sequence DQDEDDELSSEESNSSMNDDSSDEAESDMDDL. Positions 312-358 constitute a G-patch domain; sequence TRGIGSKLMEKMGYIHGTGLGSDGRGIVTPVSAQILPQGRSLDACME. Basic and acidic residues predominate over residues 455-467; sequence DMAKVKQSLDRNS. Positions 455–513 are disordered; the sequence is DMAKVKQSLDRNSGDAQLQKRLQVQMESHKQELATLQAQERSLSKEQQTRKSKNKMFEF. Residues 468 to 480 are compositionally biased toward polar residues; that stretch reads GDAQLQKRLQVQM. Positions 496–513 are enriched in basic and acidic residues; the sequence is SLSKEQQTRKSKNKMFEF.

The protein resides in the nucleus. Its function is as follows. Transcription repressor. The polypeptide is Zinc finger CCCH-type with G patch domain-containing protein (Drosophila yakuba (Fruit fly)).